A 496-amino-acid chain; its full sequence is ATP synthase subunit beta (496 aa).

155 to 162 (GGAGVGKT) contributes to the ATP binding site.

It belongs to the ATPase alpha/beta chains family. In terms of assembly, F-type ATPases have 2 components, CF(1) - the catalytic core - and CF(0) - the membrane proton channel. CF(1) has five subunits: alpha(3), beta(3), gamma(1), delta(1), epsilon(1). CF(0) has three main subunits: a(1), b(2) and c(9-12). The alpha and beta chains form an alternating ring which encloses part of the gamma chain. CF(1) is attached to CF(0) by a central stalk formed by the gamma and epsilon chains, while a peripheral stalk is formed by the delta and b chains.

The protein localises to the cell membrane. It carries out the reaction ATP + H2O + 4 H(+)(in) = ADP + phosphate + 5 H(+)(out). In terms of biological role, produces ATP from ADP in the presence of a proton gradient across the membrane. The catalytic sites are hosted primarily by the beta subunits. The polypeptide is ATP synthase subunit beta (Karelsulcia muelleri (strain GWSS) (Sulcia muelleri)).